The chain runs to 1431 residues: DNA-directed RNA polymerase subunit beta' (1431 aa).

Residues Cys-66, Cys-68, Cys-81, and Cys-84 each contribute to the Zn(2+) site. Asp-470, Asp-472, and Asp-474 together coordinate Mg(2+). Zn(2+) contacts are provided by Cys-813, Cys-887, Cys-894, and Cys-897.

This sequence belongs to the RNA polymerase beta' chain family. As to quaternary structure, the RNAP catalytic core consists of 2 alpha, 1 beta, 1 beta' and 1 omega subunit. When a sigma factor is associated with the core the holoenzyme is formed, which can initiate transcription. Mg(2+) is required as a cofactor. It depends on Zn(2+) as a cofactor.

The enzyme catalyses RNA(n) + a ribonucleoside 5'-triphosphate = RNA(n+1) + diphosphate. DNA-dependent RNA polymerase catalyzes the transcription of DNA into RNA using the four ribonucleoside triphosphates as substrates. The chain is DNA-directed RNA polymerase subunit beta' from Parabacteroides distasonis (strain ATCC 8503 / DSM 20701 / CIP 104284 / JCM 5825 / NCTC 11152).